The following is a 389-amino-acid chain: MTTLPAKVLLLGSGELGKEVAIAAQRLGCHVIACDRYADAPAMQVADEAEVLAMTDREALLEVVRRHKPTVVIPEIEALAVNALAELEDEGLTVIPTARATAVTMNRDRIRDLAAGELALRTARFAYAASAEELHAEAPALGWPVVVKPVMSSSGKGQSVVDGPEGLNEAWEAAMANARGTSTHVIVEEFLRFDLEITLLTIRQRDGSTLFCPPIGHEQARGDYQCSWQPAALSDKQLSEAQAMARTVTDNLGGAGLFGVEFFLCGDEVIFSELSPRPHDTGLVTLISQNLNEFELHLRAVLGLPIPAIRCADAAASRVILADKHGSRVTYSGMEEALQESETSVFLFGKRDARPGRRMGVALARGEHQAEARAKADRSAAAVHLHIED.

Residues 15–16 (EL) and glutamate 75 contribute to the N(1)-(5-phospho-beta-D-ribosyl)glycinamide site. ATP-binding positions include arginine 107, lysine 148, 153–158 (SSGKGQ), 188–191 (EEFL), and glutamate 196. In terms of domain architecture, ATP-grasp spans 112–302 (DLAAGELALR…EFELHLRAVL (191 aa)). Positions 261 and 273 each coordinate Mg(2+). Residues aspartate 280, lysine 350, and 357-358 (RR) each bind N(1)-(5-phospho-beta-D-ribosyl)glycinamide.

Belongs to the PurK/PurT family. In terms of assembly, homodimer.

The enzyme catalyses N(1)-(5-phospho-beta-D-ribosyl)glycinamide + formate + ATP = N(2)-formyl-N(1)-(5-phospho-beta-D-ribosyl)glycinamide + ADP + phosphate + H(+). It participates in purine metabolism; IMP biosynthesis via de novo pathway; N(2)-formyl-N(1)-(5-phospho-D-ribosyl)glycinamide from N(1)-(5-phospho-D-ribosyl)glycinamide (formate route): step 1/1. Its function is as follows. Involved in the de novo purine biosynthesis. Catalyzes the transfer of formate to 5-phospho-ribosyl-glycinamide (GAR), producing 5-phospho-ribosyl-N-formylglycinamide (FGAR). Formate is provided by PurU via hydrolysis of 10-formyl-tetrahydrofolate. In Synechococcus sp. (strain WH7803), this protein is Formate-dependent phosphoribosylglycinamide formyltransferase.